Reading from the N-terminus, the 466-residue chain is 3-isopropylmalate dehydratase large subunit (466 aa).

Positions 347, 407, and 410 each coordinate [4Fe-4S] cluster.

This sequence belongs to the aconitase/IPM isomerase family. LeuC type 1 subfamily. As to quaternary structure, heterodimer of LeuC and LeuD. The cofactor is [4Fe-4S] cluster.

The catalysed reaction is (2R,3S)-3-isopropylmalate = (2S)-2-isopropylmalate. It participates in amino-acid biosynthesis; L-leucine biosynthesis; L-leucine from 3-methyl-2-oxobutanoate: step 2/4. Functionally, catalyzes the isomerization between 2-isopropylmalate and 3-isopropylmalate, via the formation of 2-isopropylmaleate. The sequence is that of 3-isopropylmalate dehydratase large subunit from Acidiphilium cryptum (strain JF-5).